Consider the following 156-residue polypeptide: MSAVLDTPVAIRRTAMDLLARREHGRVELTRKLRQRGASDELIEPELDRLAEEGLLSEARYLESFIRYRSGSGYGPARIREELCQRGLARADIDQALRESEVNWSERMRDVWQRKFAGQRPQDPRSRAQQTRFLAYRGFPMDMIGRLLSGRDLDDY.

It belongs to the RecX family.

The protein localises to the cytoplasm. In terms of biological role, modulates RecA activity. This chain is Regulatory protein RecX, found in Pseudomonas putida (strain ATCC 47054 / DSM 6125 / CFBP 8728 / NCIMB 11950 / KT2440).